A 415-amino-acid polypeptide reads, in one-letter code: Alpha-N-acetylgalactosaminidase (415 aa).

The N-terminal stretch at 1 to 17 (MLQKTVLLLALVAQVLM) is a signal peptide. 3 cysteine pairs are disulfide-bonded: C38-C80, C42-C49, and C127-C158. Residues 78–79 (DD) and K154 each bind substrate. D156 (nucleophile) is an active-site residue. N177 carries N-linked (GlcNAc...) asparagine glycosylation. C187 and C209 form a disulfide bridge. S188 contacts substrate. Residue N201 is glycosylated (N-linked (GlcNAc...) asparagine). R213 and D217 together coordinate substrate. The Proton donor role is filled by D217. Residue S322 is modified to Phosphoserine. N330 is a glycosylation site (N-linked (GlcNAc...) asparagine). S332 is modified (phosphoserine). A glycan (N-linked (GlcNAc...) asparagine) is linked at N385.

The protein belongs to the glycosyl hydrolase 27 family. As to quaternary structure, homodimer.

The protein localises to the lysosome. The catalysed reaction is Cleavage of non-reducing alpha-(1-&gt;3)-N-acetylgalactosamine residues from human blood group A and AB mucin glycoproteins, Forssman hapten and blood group A lacto series glycolipids.. The enzyme catalyses a neolactoside IV(3)-alpha-GalNAc,IV(2)-alpha-Fuc-nLc4Cer(d18:1(4E)) + H2O = a neolactoside IV(2)-alpha-Fuc-nLc4Cer(d18:1(4E)) + N-acetyl-alpha-D-galactosamine. It catalyses the reaction a neolactoside IV(3)-alpha-GalNAc,IV(2)-alpha-Fuc-nLc4Cer(d18:0) + H2O = a neolactoside IV(2)-alpha-Fuc-nLc4Cer(d18:0) + N-acetyl-alpha-D-galactosamine. It carries out the reaction a globoside IV3GalNAc-Gb4Cer + H2O = N-acetyl-alpha-D-galactosamine + a globoside Gb4Cer. Functionally, removes terminal alpha-N-acetylgalactosamine residues from glycolipids and glycopeptides. Required for the breakdown of glycolipids. The polypeptide is Alpha-N-acetylgalactosaminidase (Naga) (Rattus norvegicus (Rat)).